A 727-amino-acid chain; its full sequence is Alpha-1,3-galactosidase A (727 aa).

A disordered region spans residues A220–P241. A compositionally biased stretch (polar residues) spans T221–P230. PbH1 repeat units lie at residues K336 to G358, T461 to T483, R484 to S506, V517 to D538, H551 to R572, and V574 to D603.

It belongs to the glycosyl hydrolase 110 family. A subfamily.

It catalyses the reaction Hydrolysis of terminal, non-reducing branched (1-&gt;3)-alpha-D-galactosidic residues, producing free D-galactose.. It carries out the reaction Hydrolysis of terminal, non-reducing alpha-D-galactose residues in alpha-D-galactosides, including galactose oligosaccharides, galactomannans and galactolipids.. Alpha-galactosidase that specifically removes branched alpha-1,3-linked galactose residues present in blood group B antigens. Has no activity toward linear alpha-1,3-linked galactose residues. This is Alpha-1,3-galactosidase A (glaA) from Peterkaempfera griseoplana (Streptacidiphilus griseoplanus).